The primary structure comprises 209 residues: Ion-translocating oxidoreductase complex subunit G (209 aa).

Residues 9-29 (GLILAVFACVSTGLVALTYAL) form a helical membrane-spanning segment. Position 175 is an FMN phosphoryl threonine (Thr175).

The protein belongs to the RnfG family. The complex is composed of six subunits: RnfA, RnfB, RnfC, RnfD, RnfE and RnfG. Requires FMN as cofactor.

It localises to the cell inner membrane. Part of a membrane-bound complex that couples electron transfer with translocation of ions across the membrane. The protein is Ion-translocating oxidoreductase complex subunit G of Vibrio cholerae serotype O1 (strain ATCC 39315 / El Tor Inaba N16961).